Reading from the N-terminus, the 103-residue chain is Small ribosomal subunit protein uS10 (103 aa).

The protein belongs to the universal ribosomal protein uS10 family. Part of the 30S ribosomal subunit.

Involved in the binding of tRNA to the ribosomes. The polypeptide is Small ribosomal subunit protein uS10 (Pectobacterium atrosepticum (strain SCRI 1043 / ATCC BAA-672) (Erwinia carotovora subsp. atroseptica)).